The following is a 445-amino-acid chain: Phosphoglucosamine mutase (445 aa).

S102 acts as the Phosphoserine intermediate in catalysis. S102, D240, D242, and D244 together coordinate Mg(2+). S102 carries the post-translational modification Phosphoserine.

It belongs to the phosphohexose mutase family. It depends on Mg(2+) as a cofactor. Activated by phosphorylation.

The catalysed reaction is alpha-D-glucosamine 1-phosphate = D-glucosamine 6-phosphate. Functionally, catalyzes the conversion of glucosamine-6-phosphate to glucosamine-1-phosphate. This chain is Phosphoglucosamine mutase, found in Mycobacterium ulcerans (strain Agy99).